Reading from the N-terminus, the 88-residue chain is Low calcium response locus protein S (88 aa).

It belongs to the transposase 8 family.

The polypeptide is Low calcium response locus protein S (lcrS) (Yersinia pestis).